The sequence spans 207 residues: Large ribosomal subunit protein uL4 (207 aa).

Positions 49 to 73 are disordered; it reads AKKRGEVSGGGKKPWKQKGGGRARA.

It belongs to the universal ribosomal protein uL4 family. As to quaternary structure, part of the 50S ribosomal subunit.

One of the primary rRNA binding proteins, this protein initially binds near the 5'-end of the 23S rRNA. It is important during the early stages of 50S assembly. It makes multiple contacts with different domains of the 23S rRNA in the assembled 50S subunit and ribosome. In terms of biological role, forms part of the polypeptide exit tunnel. The chain is Large ribosomal subunit protein uL4 from Helicobacter hepaticus (strain ATCC 51449 / 3B1).